Reading from the N-terminus, the 827-residue chain is Periplasmic nitrate reductase (827 aa).

Residues 1 to 32 constitute a signal peptide (tat-type signal); the sequence is MTLSRRAFIKQTAAATAASAAGVVLPGVDALA. A 4Fe-4S Mo/W bis-MGD-type domain is found at 37–93; the sequence is LTWSKAPCRFCGTGCGVSVGVKNGKVVATQGDPQAEVNRGLNCVKGYFLSKIMYGQD. [4Fe-4S] cluster-binding residues include Cys-44, Cys-47, Cys-51, and Cys-79. Residues Lys-81, Gln-148, Asn-173, Cys-177, 241–245, 260–262, Met-371, Gln-375, Asn-481, 507–508, Lys-530, Asp-557, and 717–726 contribute to the Mo-bis(molybdopterin guanine dinucleotide) site; these read STFEH, QSD, SD, and TGRVLEHWHS. Residue Trp-793 participates in substrate binding. Asn-801 and Lys-818 together coordinate Mo-bis(molybdopterin guanine dinucleotide).

The protein belongs to the prokaryotic molybdopterin-containing oxidoreductase family. NasA/NapA/NarB subfamily. Component of the periplasmic nitrate reductase NapAB complex composed of NapA and NapB. [4Fe-4S] cluster is required as a cofactor. Mo-bis(molybdopterin guanine dinucleotide) serves as cofactor. Post-translationally, predicted to be exported by the Tat system. The position of the signal peptide cleavage has not been experimentally proven.

The protein localises to the periplasm. The catalysed reaction is 2 Fe(II)-[cytochrome] + nitrate + 2 H(+) = 2 Fe(III)-[cytochrome] + nitrite + H2O. Catalytic subunit of the periplasmic nitrate reductase complex NapAB. Receives electrons from NapB and catalyzes the reduction of nitrate to nitrite. The chain is Periplasmic nitrate reductase from Paraburkholderia xenovorans (strain LB400).